The sequence spans 190 residues: 6,7-dimethyl-8-ribityllumazine synthase (190 aa).

Residues Phe-23, 61 to 63 (SFE), and 85 to 87 (AVI) contribute to the 5-amino-6-(D-ribitylamino)uracil site. 90–91 (QT) lines the (2S)-2-hydroxy-3-oxobutyl phosphate pocket. Residue His-93 is the Proton donor of the active site. Phe-118 is a 5-amino-6-(D-ribitylamino)uracil binding site. (2S)-2-hydroxy-3-oxobutyl phosphate is bound at residue Arg-132.

This sequence belongs to the DMRL synthase family.

It catalyses the reaction (2S)-2-hydroxy-3-oxobutyl phosphate + 5-amino-6-(D-ribitylamino)uracil = 6,7-dimethyl-8-(1-D-ribityl)lumazine + phosphate + 2 H2O + H(+). It participates in cofactor biosynthesis; riboflavin biosynthesis; riboflavin from 2-hydroxy-3-oxobutyl phosphate and 5-amino-6-(D-ribitylamino)uracil: step 1/2. Functionally, catalyzes the formation of 6,7-dimethyl-8-ribityllumazine by condensation of 5-amino-6-(D-ribitylamino)uracil with 3,4-dihydroxy-2-butanone 4-phosphate. This is the penultimate step in the biosynthesis of riboflavin. In Nostoc sp. (strain PCC 7120 / SAG 25.82 / UTEX 2576), this protein is 6,7-dimethyl-8-ribityllumazine synthase.